The chain runs to 115 residues: Large ribosomal subunit protein uL18 (115 aa).

This sequence belongs to the universal ribosomal protein uL18 family. In terms of assembly, part of the 50S ribosomal subunit; part of the 5S rRNA/L5/L18/L25 subcomplex. Contacts the 5S and 23S rRNAs.

In terms of biological role, this is one of the proteins that bind and probably mediate the attachment of the 5S RNA into the large ribosomal subunit, where it forms part of the central protuberance. The protein is Large ribosomal subunit protein uL18 of Marinobacter nauticus (strain ATCC 700491 / DSM 11845 / VT8) (Marinobacter aquaeolei).